Here is a 128-residue protein sequence, read N- to C-terminus: Large ribosomal subunit protein bL20 (128 aa).

Belongs to the bacterial ribosomal protein bL20 family.

In terms of biological role, binds directly to 23S ribosomal RNA and is necessary for the in vitro assembly process of the 50S ribosomal subunit. It is not involved in the protein synthesizing functions of that subunit. The chain is Large ribosomal subunit protein bL20 from Micrococcus luteus (strain ATCC 4698 / DSM 20030 / JCM 1464 / CCM 169 / CCUG 5858 / IAM 1056 / NBRC 3333 / NCIMB 9278 / NCTC 2665 / VKM Ac-2230) (Micrococcus lysodeikticus).